Reading from the N-terminus, the 424-residue chain is Phosphoribosylamine--glycine ligase (424 aa).

An ATP-grasp domain is found at 111–312; sequence KAFVKECGIK…LLDLCLATAK (202 aa). 137-189 is an ATP binding site; that stretch reads IQNASFPLVIKALNKNTSIVYQEEEAIKILEDAFKQSNEPVIIEPFLEGFELS.

The protein belongs to the GARS family.

It carries out the reaction 5-phospho-beta-D-ribosylamine + glycine + ATP = N(1)-(5-phospho-beta-D-ribosyl)glycinamide + ADP + phosphate + H(+). It functions in the pathway purine metabolism; IMP biosynthesis via de novo pathway; N(1)-(5-phospho-D-ribosyl)glycinamide from 5-phospho-alpha-D-ribose 1-diphosphate: step 2/2. The sequence is that of Phosphoribosylamine--glycine ligase (purD) from Helicobacter pylori (strain ATCC 700392 / 26695) (Campylobacter pylori).